The sequence spans 612 residues: Dihydroxy-acid dehydratase (612 aa).

D81 lines the Mg(2+) pocket. Residue C122 coordinates [2Fe-2S] cluster. Mg(2+) is bound by residues D123 and K124. Residue K124 is modified to N6-carboxylysine. [2Fe-2S] cluster is bound at residue C195. A Mg(2+)-binding site is contributed by E491. S517 acts as the Proton acceptor in catalysis.

The protein belongs to the IlvD/Edd family. In terms of assembly, homodimer. It depends on [2Fe-2S] cluster as a cofactor. The cofactor is Mg(2+).

The catalysed reaction is (2R)-2,3-dihydroxy-3-methylbutanoate = 3-methyl-2-oxobutanoate + H2O. The enzyme catalyses (2R,3R)-2,3-dihydroxy-3-methylpentanoate = (S)-3-methyl-2-oxopentanoate + H2O. It functions in the pathway amino-acid biosynthesis; L-isoleucine biosynthesis; L-isoleucine from 2-oxobutanoate: step 3/4. Its pathway is amino-acid biosynthesis; L-valine biosynthesis; L-valine from pyruvate: step 3/4. Functions in the biosynthesis of branched-chain amino acids. Catalyzes the dehydration of (2R,3R)-2,3-dihydroxy-3-methylpentanoate (2,3-dihydroxy-3-methylvalerate) into 2-oxo-3-methylpentanoate (2-oxo-3-methylvalerate) and of (2R)-2,3-dihydroxy-3-methylbutanoate (2,3-dihydroxyisovalerate) into 2-oxo-3-methylbutanoate (2-oxoisovalerate), the penultimate precursor to L-isoleucine and L-valine, respectively. The chain is Dihydroxy-acid dehydratase from Haemophilus influenzae (strain 86-028NP).